A 524-amino-acid chain; its full sequence is MAETQRPVLVVDFGAQYAQLIARRVREASVYSEVVPHTATVEEIAAKKPLAVILSGGPASVYAEGAPQLDPRLFDLNLPVFGICYGFQAMAQALGGTVAHTGTREYGRTELNIDGGVLHGGLPTIQPVWMSHGDAVTDAPEGFEVTGTTAGAPVAAFEDRARRLAGVQYHPEVLHSPHGQQVLSRFLHELAGIPASWTPSNIADVLVEQVRAQVGDGHAICGLSGGVDSAVAAALVQRAIGDRLTCVFVDHGLLRAGEREQVQQDFVASTGAKLVTVDAVDKFLGELKGVTDPEEKRKIIGREFIRSFEDAVRQIVDEQGAAEGKQPEVEFLVQGTLYPDVVESGGGTGTANIKSHHNVGGLPEDLEFELVEPLRLLFKDEVRAVGRELGLPEEIVARQPFPGPGLAIRIIGEVTADRLATLRQADAIAREELTAAGLDRQIWQCPVVLLADVRSVGVQGDGRTYGHPIVLRPVSSEDAMTADWTRLPYEVLERISTRITNEVAEVNRVVLDVTSKPPGTIEWE.

The 190-residue stretch at 7–196 folds into the Glutamine amidotransferase type-1 domain; that stretch reads PVLVVDFGAQ…LHELAGIPAS (190 aa). The active-site Nucleophile is C84. Active-site residues include H170 and E172. One can recognise a GMPS ATP-PPase domain in the interval 197 to 398; the sequence is WTPSNIADVL…LGLPEEIVAR (202 aa). Position 224 to 230 (224 to 230) interacts with ATP; that stretch reads SGGVDSA.

In terms of assembly, homodimer.

It carries out the reaction XMP + L-glutamine + ATP + H2O = GMP + L-glutamate + AMP + diphosphate + 2 H(+). It functions in the pathway purine metabolism; GMP biosynthesis; GMP from XMP (L-Gln route): step 1/1. Its function is as follows. Catalyzes the synthesis of GMP from XMP. The polypeptide is GMP synthase [glutamine-hydrolyzing] (Nocardia farcinica (strain IFM 10152)).